Here is a 39-residue protein sequence, read N- to C-terminus: Photosystem II reaction center protein L (39 aa).

A helical membrane pass occupies residues 18–38; it reads SLYLGLLLVFVMGILFSSYFF.

Belongs to the PsbL family. PSII is composed of 1 copy each of membrane proteins PsbA, PsbB, PsbC, PsbD, PsbE, PsbF, PsbH, PsbI, PsbJ, PsbK, PsbL, PsbM, PsbT, PsbX, PsbY, Psb30/Ycf12, peripheral proteins PsbO, CyanoQ (PsbQ), PsbU, PsbV and a large number of cofactors. It forms dimeric complexes.

Its subcellular location is the cellular thylakoid membrane. Functionally, one of the components of the core complex of photosystem II (PSII). PSII is a light-driven water:plastoquinone oxidoreductase that uses light energy to abstract electrons from H(2)O, generating O(2) and a proton gradient subsequently used for ATP formation. It consists of a core antenna complex that captures photons, and an electron transfer chain that converts photonic excitation into a charge separation. This subunit is found at the monomer-monomer interface and is required for correct PSII assembly and/or dimerization. The chain is Photosystem II reaction center protein L from Prochlorococcus marinus (strain NATL2A).